Consider the following 389-residue polypeptide: Phospho-N-acetylmuramoyl-pentapeptide-transferase (389 aa).

The next 10 helical transmembrane spans lie at 25–45, 73–93, 97–117, 135–155, 190–210, 222–242, 258–278, 286–306, 311–331, and 366–386; these read RAVMATVTALLIGLAAGPWVI, TMGGVLILIGIFVSCMLWADL, FIWIVMIVTFGFGAVGWVDDY, FWQTLIGLFAAIYLAFSVSEI, VSYPLGMMGFIILSYLVIVGS, GLVIMPVILVGAALGAFAYVM, GAGELMIFCGAMGGAGLAFLW, VFMGDVGALALGGALGTIAVI, IVLFVMGGIFVAETVSVMMQV, and QVVVRFWIITILLVLIGLSSL.

It belongs to the glycosyltransferase 4 family. MraY subfamily. The cofactor is Mg(2+).

The protein localises to the cell inner membrane. It catalyses the reaction UDP-N-acetyl-alpha-D-muramoyl-L-alanyl-gamma-D-glutamyl-meso-2,6-diaminopimeloyl-D-alanyl-D-alanine + di-trans,octa-cis-undecaprenyl phosphate = di-trans,octa-cis-undecaprenyl diphospho-N-acetyl-alpha-D-muramoyl-L-alanyl-D-glutamyl-meso-2,6-diaminopimeloyl-D-alanyl-D-alanine + UMP. It participates in cell wall biogenesis; peptidoglycan biosynthesis. In terms of biological role, catalyzes the initial step of the lipid cycle reactions in the biosynthesis of the cell wall peptidoglycan: transfers peptidoglycan precursor phospho-MurNAc-pentapeptide from UDP-MurNAc-pentapeptide onto the lipid carrier undecaprenyl phosphate, yielding undecaprenyl-pyrophosphoryl-MurNAc-pentapeptide, known as lipid I. The polypeptide is Phospho-N-acetylmuramoyl-pentapeptide-transferase (Polynucleobacter asymbioticus (strain DSM 18221 / CIP 109841 / QLW-P1DMWA-1) (Polynucleobacter necessarius subsp. asymbioticus)).